The following is a 300-amino-acid chain: C-5 sterol desaturase (300 aa).

A run of 4 helical transmembrane segments spans residues 3-23, 68-88, 91-111, and 147-167; these read DPVLFAIPCFLLLLILEWTAA, SLALLGYAAIYAYLAPWQLSA, WYTWVIAIVGVDLLYYSYHRI, and ILMWVPLPLMGLPPWMVFCSW. Residues 94–227 enclose the Fatty acid hydroxylase domain; that stretch reads WVIAIVGVDL…LIIWDRLFGS (134 aa).

Belongs to the sterol desaturase family.

Its subcellular location is the cell membrane. In Mycobacterium bovis (strain ATCC BAA-935 / AF2122/97), this protein is C-5 sterol desaturase (erg3).